Consider the following 289-residue polypeptide: O-methyltransferase asqN (289 aa).

Aspartate 155 contacts S-adenosyl-L-methionine. The active-site Proton acceptor is the histidine 195.

This sequence belongs to the class I-like SAM-binding methyltransferase superfamily. Cation-independent O-methyltransferase family.

It participates in secondary metabolite biosynthesis. The protein operates within alkaloid biosynthesis. Its pathway is mycotoxin biosynthesis. In terms of biological role, O-methyltransferase; part of the gene cluster that mediates the biosynthesis of the aspoquinolone mycotoxins. The role of asqN within the aspoquinolone pathway has still to be determined. The first step of the pathway is catalyzed by the nonribosomal peptide synthetase asqK that condenses anthranilic acid and O-methyl-L-tyrosine to produce 4'-methoxycyclopeptin. 4'-methoxycyclopeptin is then converted to 4'-methoxydehydrocyclopeptin by the ketoglutarate-dependent dioxygenase asqJ. AsqJ also converts its first product 4'-methoxydehydrocyclopeptin to 4'-methoxycyclopenin. The following conversion of 4'-methoxycyclopenin into 4'-methoxyviridicatin is catalyzed by the cyclopenase asqI. 4'-methoxyviridicatin is the precursor of quinolone natural products, and is further converted to quinolinone B. The prenyltransferase asqH1 then catalyzes the canonical Friedel-Crafts alkylation of quinolinone B with dimethylallyl cation to yield dimethylallyl quinolone, which is subjected to FAD-dependent dehydrogenation by the FAD-linked oxidoreductase asqF to yield conjugated aryl diene. The delta(3') double bond then serves as the site of the second alkylation with DMAPP catalyzed by the prenyltransferase asqH2 to yield a carbenium ion intermediate, which can be attacked by H(2)O to yield a styrenyl quinolone containing a C3'-hydroxyprenyl chain. The FAD-dependent monooxygenase asqG performs epoxidation of the terminal C7'-C8' olefin. Finally, after dehydratation of the epoxide at C3 by asqC, the quinolone epoxide rearrangement protein asqO catalyzes an enzymatic 3-exo-tet cyclization to yield the cyclopropyl-THF ring system in aspoquinolone. In Emericella nidulans (strain FGSC A4 / ATCC 38163 / CBS 112.46 / NRRL 194 / M139) (Aspergillus nidulans), this protein is O-methyltransferase asqN.